The chain runs to 540 residues: Chaperonin GroEL 2 (540 aa).

ATP contacts are provided by residues 30-33, Lys51, 87-91, Gly415, 480-482, and Asp496; these read TLGP, DGTTT, and NAL.

This sequence belongs to the chaperonin (HSP60) family. In terms of assembly, forms a cylinder of 14 subunits composed of two heptameric rings stacked back-to-back. Interacts with the co-chaperonin GroES.

The protein resides in the cytoplasm. It carries out the reaction ATP + H2O + a folded polypeptide = ADP + phosphate + an unfolded polypeptide.. Its function is as follows. Together with its co-chaperonin GroES, plays an essential role in assisting protein folding. The GroEL-GroES system forms a nano-cage that allows encapsulation of the non-native substrate proteins and provides a physical environment optimized to promote and accelerate protein folding. This is Chaperonin GroEL 2 from Protochlamydia amoebophila (strain UWE25).